The chain runs to 295 residues: Protoheme IX farnesyltransferase 2 (295 aa).

Transmembrane regions (helical) follow at residues 9–29, 36–56, 83–103, 108–128, 135–155, 163–183, 209–229, 230–250, and 264–284; these read ITKP…FFLA, FALF…GCVF, LTLA…LLYV, LAAF…SLWL, GTLV…CAVS, VTLL…IAIF, IVLY…GGYA, GLGY…MAWG, and VFGF…VDSQ.

Belongs to the UbiA prenyltransferase family. Protoheme IX farnesyltransferase subfamily.

The protein localises to the cell inner membrane. It catalyses the reaction heme b + (2E,6E)-farnesyl diphosphate + H2O = Fe(II)-heme o + diphosphate. It functions in the pathway porphyrin-containing compound metabolism; heme O biosynthesis; heme O from protoheme: step 1/1. Functionally, converts heme B (protoheme IX) to heme O by substitution of the vinyl group on carbon 2 of heme B porphyrin ring with a hydroxyethyl farnesyl side group. The chain is Protoheme IX farnesyltransferase 2 from Pseudomonas entomophila (strain L48).